Consider the following 372-residue polypeptide: Histidine protein methyltransferase 1 homolog (372 aa).

Disordered stretches follow at residues 30–55 (SKEL…QFDL) and 68–103 (NAAP…AKEH). The segment covering 39-49 (QKGEERDRKCS) has biased composition (basic and acidic residues). The segment covering 70 to 87 (APSQDTDSPLSAASSSRN) has biased composition (polar residues). 2 positions are modified to phosphoserine: S72 and S77. H154 is modified (tele-methylhistidine; by autocatalysis). S-adenosyl-L-methionine is bound by residues 168-172 (IWECT), G195, and 216-218 (QDY). A Nuclear localization signal motif is present at residues 247–253 (PDVKRCR). S-adenosyl-L-methionine is bound by residues 268–270 (GEW) and S293.

Belongs to the methyltransferase superfamily. METTL18 family. In terms of assembly, interacts with GRWD1 and members of the heat shock protein 90 and 70 families; these proteins may possibly be methylation substrates for the enzyme. Monomethylated at His-154 through automethylation. Automethylation at His-154 positively regulates the methyltransferase activity toward RPL3. Probably methylated on other residues.

It localises to the cytoplasm. The protein localises to the cytosol. Its subcellular location is the nucleus. The protein resides in the nucleolus. It carries out the reaction L-histidyl-[protein] + S-adenosyl-L-methionine = N(tele)-methyl-L-histidyl-[protein] + S-adenosyl-L-homocysteine + H(+). Protein-L-histidine N-tele-methyltransferase that specifically monomethylates RPL3, thereby regulating translation elongation. Histidine methylation of RPL3 regulates translation elongation by slowing ribosome traversal on tyrosine codons: slower elongation provides enough time for proper folding of synthesized proteins and prevents cellular aggregation of tyrosine-rich proteins. The protein is Histidine protein methyltransferase 1 homolog of Homo sapiens (Human).